Reading from the N-terminus, the 495-residue chain is UDP-N-acetylmuramoyl-L-alanyl-D-glutamate--2,6-diaminopimelate ligase (495 aa).

Residues leucine 27, serine 29, and 44-46 (HQA) contribute to the UDP-N-acetyl-alpha-D-muramoyl-L-alanyl-D-glutamate site. 116–122 (GTNGKTT) lines the ATP pocket. UDP-N-acetyl-alpha-D-muramoyl-L-alanyl-D-glutamate contacts are provided by residues asparagine 157, 158-159 (TT), serine 185, glutamine 191, and arginine 193. The residue at position 225 (lysine 225) is an N6-carboxylysine. Meso-2,6-diaminopimelate is bound by residues arginine 390, 414–417 (DNPR), glycine 465, and glutamate 469. A Meso-diaminopimelate recognition motif motif is present at residues 414–417 (DNPR).

The protein belongs to the MurCDEF family. MurE subfamily. Requires Mg(2+) as cofactor. In terms of processing, carboxylation is probably crucial for Mg(2+) binding and, consequently, for the gamma-phosphate positioning of ATP.

It localises to the cytoplasm. The enzyme catalyses UDP-N-acetyl-alpha-D-muramoyl-L-alanyl-D-glutamate + meso-2,6-diaminopimelate + ATP = UDP-N-acetyl-alpha-D-muramoyl-L-alanyl-gamma-D-glutamyl-meso-2,6-diaminopimelate + ADP + phosphate + H(+). It participates in cell wall biogenesis; peptidoglycan biosynthesis. Activated by potassium phosphate. Functionally, catalyzes the addition of meso-diaminopimelic acid to the nucleotide precursor UDP-N-acetylmuramoyl-L-alanyl-D-glutamate (UMAG) in the biosynthesis of bacterial cell-wall peptidoglycan. Is also able to use many meso-diaminopimelate analogs as substrates, although much less efficiently, but not L-lysine. In Escherichia coli (strain K12), this protein is UDP-N-acetylmuramoyl-L-alanyl-D-glutamate--2,6-diaminopimelate ligase (murE).